Consider the following 450-residue polypeptide: Dol-P-Glc:Glc(2)Man(9)GlcNAc(2)-PP-Dol alpha-1,2-glucosyltransferase (450 aa).

The chain crosses the membrane as a helical span at residues 12–32 (ISIISKYVAIVIFLIFVIIMF). An N-linked (GlcNAc...) asparagine glycan is attached at N34. A run of 4 helical transmembrane segments spans residues 158–178 (YFLFYTDVSSTILIILSLGLI), 190–210 (ALVGFMSLWFRQTNIIWIAFI), 243–263 (LLGYIVNIILFVIFLKLNGGI), and 273–293 (IELHIVQVFYCFTFITFFTIP). N-linked (GlcNAc...) asparagine glycosylation is present at N297. The next 4 membrane-spanning stretches (helical) occupy residues 312 to 332 (IILNLVIGLIIWYIMENFTIV), 357 to 377 (LKPLILMAYHFSSFQIISSLI), 384 to 404 (FIGIFSYLIAVGLTLIPSPLF), and 429 to 449 (FIWLNSINLITSYIFLHKGII).

The protein belongs to the ALG10 glucosyltransferase family.

It is found in the endoplasmic reticulum membrane. The catalysed reaction is an alpha-D-Glc-(1-&gt;3)-alpha-D-Glc-(1-&gt;3)-alpha-D-Man-(1-&gt;2)-alpha-D-Man-(1-&gt;2)-alpha-D-Man-(1-&gt;3)-[alpha-D-Man-(1-&gt;2)-alpha-D-Man-(1-&gt;3)-[alpha-D-Man-(1-&gt;2)-alpha-D-Man-(1-&gt;6)]-alpha-D-Man-(1-&gt;6)]-beta-D-Man-(1-&gt;4)-beta-D-GlcNAc-(1-&gt;4)-alpha-D-GlcNAc-diphospho-di-trans,poly-cis-dolichol + a di-trans,poly-cis-dolichyl beta-D-glucosyl phosphate = a alpha-D-Glc-(1-&gt;2)-alpha-D-Glc-(1-&gt;3)-alpha-D-Glc-(1-&gt;3)-alpha-D-Man-(1-&gt;2)-alpha-D-Man-(1-&gt;2)-alpha-D-Man-(1-&gt;3)-[alpha-D-Man-(1-&gt;2)-alpha-D-Man-(1-&gt;3)-[alpha-D-Man-(1-&gt;2)-alpha-D-Man-(1-&gt;6)]-alpha-D-Man-(1-&gt;6)]-beta-D-Man-(1-&gt;4)-beta-D-GlcNAc-(1-&gt;4)-alpha-D-GlcNAc-diphospho-di-trans,poly-cis-dolichol + a di-trans,poly-cis-dolichyl phosphate + H(+). It participates in protein modification; protein glycosylation. In terms of biological role, dol-P-Glc:Glc(2)Man(9)GlcNAc(2)-PP-Dol alpha-1,2-glucosyltransferase that operates in the biosynthetic pathway of dolichol-linked oligosaccharides, the glycan precursors employed in protein asparagine (N)-glycosylation. The assembly of dolichol-linked oligosaccharides begins on the cytosolic side of the endoplasmic reticulum membrane and finishes in its lumen. The sequential addition of sugars to dolichol pyrophosphate produces dolichol-linked oligosaccharides containing fourteen sugars, including two GlcNAcs, nine mannoses and three glucoses. Once assembled, the oligosaccharide is transferred from the lipid to nascent proteins by oligosaccharyltransferases. In the lumen of the endoplasmic reticulum, adds the third and last glucose residue from dolichyl phosphate glucose (Dol-P-Glc) onto the lipid-linked oligosaccharide intermediate Glc(2)Man(9)GlcNAc(2)-PP-Dol to produce Glc(3)Man(9)GlcNAc(2)-PP-Dol. The chain is Dol-P-Glc:Glc(2)Man(9)GlcNAc(2)-PP-Dol alpha-1,2-glucosyltransferase (DIE2) from Candida albicans (strain SC5314 / ATCC MYA-2876) (Yeast).